The chain runs to 326 residues: 3-methyl-2-oxobutanoate hydroxymethyltransferase 1 (326 aa).

Residues Asp-52, Asp-91, and Glu-122 each contribute to the Mg(2+) site. Residues 52 to 53 and Asp-91 each bind 3-methyl-2-oxobutanoate; that span reads DS. The active-site Proton acceptor is Glu-189.

The protein belongs to the PanB family. Homodecamer; pentamer of dimers. Mg(2+) is required as a cofactor.

It localises to the cytoplasm. It catalyses the reaction 3-methyl-2-oxobutanoate + (6R)-5,10-methylene-5,6,7,8-tetrahydrofolate + H2O = 2-dehydropantoate + (6S)-5,6,7,8-tetrahydrofolate. The protein operates within cofactor biosynthesis; (R)-pantothenate biosynthesis; (R)-pantoate from 3-methyl-2-oxobutanoate: step 1/2. Its function is as follows. Catalyzes the reversible reaction in which hydroxymethyl group from 5,10-methylenetetrahydrofolate is transferred onto alpha-ketoisovalerate to form ketopantoate. The protein is 3-methyl-2-oxobutanoate hydroxymethyltransferase 1 of Bradyrhizobium diazoefficiens (strain JCM 10833 / BCRC 13528 / IAM 13628 / NBRC 14792 / USDA 110).